Reading from the N-terminus, the 355-residue chain is Phospho-N-acetylmuramoyl-pentapeptide-transferase (355 aa).

Helical transmembrane passes span 3-23 (GVLIAAMVALVVSLLGTPWVI), 56-76 (VIIVAALAGYFLAHLVTGIGF), 80-100 (GLLVLMVMTGLGLVGFLDDYI), 120-140 (AAVAIVFGLLAVRFKNDAGLL), 156-176 (VGIIAFPLLAWIIIAATSNAV), 185-205 (LAAGTSAMVFGAYVIISFWQF), 224-244 (PLDVALVAAAAMGACFGFLWW), 251-271 (IFMGDTGSLALGGAFASIAIV), 276-296 (LLLVVLGGLFVIETLSVMIQV), and 330-350 (FWIVSGLAVAFGLGLFYAEFL).

The protein belongs to the glycosyltransferase 4 family. MraY subfamily. Mg(2+) is required as a cofactor.

The protein resides in the cell membrane. The enzyme catalyses UDP-N-acetyl-alpha-D-muramoyl-L-alanyl-gamma-D-glutamyl-meso-2,6-diaminopimeloyl-D-alanyl-D-alanine + di-trans,octa-cis-undecaprenyl phosphate = di-trans,octa-cis-undecaprenyl diphospho-N-acetyl-alpha-D-muramoyl-L-alanyl-D-glutamyl-meso-2,6-diaminopimeloyl-D-alanyl-D-alanine + UMP. It functions in the pathway cell wall biogenesis; peptidoglycan biosynthesis. In terms of biological role, catalyzes the initial step of the lipid cycle reactions in the biosynthesis of the cell wall peptidoglycan: transfers peptidoglycan precursor phospho-MurNAc-pentapeptide from UDP-MurNAc-pentapeptide onto the lipid carrier undecaprenyl phosphate, yielding undecaprenyl-pyrophosphoryl-MurNAc-pentapeptide, known as lipid I. In Frankia casuarinae (strain DSM 45818 / CECT 9043 / HFP020203 / CcI3), this protein is Phospho-N-acetylmuramoyl-pentapeptide-transferase.